A 212-amino-acid chain; its full sequence is ATP-dependent dethiobiotin synthetase BioD (212 aa).

12–17 (DCGKTF) lines the ATP pocket. Thr-16 lines the Mg(2+) pocket. The active site involves Lys-33. Ser-37 serves as a coordination point for substrate. ATP is bound by residues Asp-50, 110-113 (EGAG), and 170-171 (NC). The Mg(2+) site is built by Asp-50 and Glu-110.

The protein belongs to the dethiobiotin synthetase family. As to quaternary structure, homodimer. The cofactor is Mg(2+).

The protein localises to the cytoplasm. The enzyme catalyses (7R,8S)-7,8-diammoniononanoate + CO2 + ATP = (4R,5S)-dethiobiotin + ADP + phosphate + 3 H(+). It functions in the pathway cofactor biosynthesis; biotin biosynthesis; biotin from 7,8-diaminononanoate: step 1/2. In terms of biological role, catalyzes a mechanistically unusual reaction, the ATP-dependent insertion of CO2 between the N7 and N8 nitrogen atoms of 7,8-diaminopelargonic acid (DAPA, also called 7,8-diammoniononanoate) to form a ureido ring. This Legionella pneumophila (strain Paris) protein is ATP-dependent dethiobiotin synthetase BioD.